The sequence spans 574 residues: Ribonuclease Y (574 aa).

A helical membrane pass occupies residues 1–21; that stretch reads MSLLDLVLLLLVLGLGGVLLL. The 64-residue stretch at 264-327 folds into the KH domain; that stretch reads AVTVVPIPSD…EIARMALEEL (64 aa). An HD domain is found at 390–483; the sequence is VLKHSIQVAH…VAAADALSAA (94 aa).

It belongs to the RNase Y family.

The protein localises to the cell membrane. Its function is as follows. Endoribonuclease that initiates mRNA decay. The protein is Ribonuclease Y of Thermus thermophilus (strain ATCC 27634 / DSM 579 / HB8).